We begin with the raw amino-acid sequence, 399 residues long: MSHFAKVARVPGDPILGLLDAYRNDPRADKLDLGVGVYKDAQGLTPILRSVKLAEQRLVEQETTKSYVGGHGDALFAARLAELALGAASPLLLEQRADATQTPGGTGALRLAGDFIAHCLPGRGIWLSDPTWPIHETLFAAAGLKVSHYPYVSADNRLDVEAMLAGLERIPQGDVVLLHACCHNPTGFDLSHDDWRRVLDVVRRRELLPLIDFAYQGFGDGLEEDAWAVRLFAGELPEVLVTSSCSKNFGLYRDRVGALIVCAQNAEKLTDLRSQLAFLARNLWSTPPAHGAEVVAAILGDSELKGLWQEEVEGMRSRIASLRIGLVEALAPHGLAERFAHVGAQRGMFSYTGLSPQQVARLRDEHAVYLVSSGRANVAGLDARRLDRLAQAIAQVCAD.

Substrate-binding residues include G36, Y67, W132, and N184. The residue at position 247 (K247) is an N6-(pyridoxal phosphate)lysine. Position 375 (R375) interacts with substrate.

The protein belongs to the class-I pyridoxal-phosphate-dependent aminotransferase family. Homodimer. It depends on pyridoxal 5'-phosphate as a cofactor.

It localises to the cytoplasm. The catalysed reaction is an aromatic L-alpha-amino acid + 2-oxoglutarate = an aromatic oxo-acid + L-glutamate. The polypeptide is Aromatic-amino-acid aminotransferase (phhC) (Pseudomonas aeruginosa (strain ATCC 15692 / DSM 22644 / CIP 104116 / JCM 14847 / LMG 12228 / 1C / PRS 101 / PAO1)).